The chain runs to 167 residues: Ribosome maturation factor RimM (167 aa).

A PRC barrel domain is found at 94 to 166 (QNRAWLHELE…YIVVPRFDEF (73 aa)).

This sequence belongs to the RimM family. In terms of assembly, binds ribosomal protein uS19.

It is found in the cytoplasm. An accessory protein needed during the final step in the assembly of 30S ribosomal subunit, possibly for assembly of the head region. Essential for efficient processing of 16S rRNA. May be needed both before and after RbfA during the maturation of 16S rRNA. It has affinity for free ribosomal 30S subunits but not for 70S ribosomes. The protein is Ribosome maturation factor RimM of Chlorobium phaeovibrioides (strain DSM 265 / 1930) (Prosthecochloris vibrioformis (strain DSM 265)).